The sequence spans 171 residues: NADH-quinone oxidoreductase subunit I (171 aa).

4Fe-4S ferredoxin-type domains follow at residues 41–71 (LTRDPDGEERCVACNLCAAVCPVDCIALQKT) and 81–110 (EFFRINFSRCILCGLCEEACPTYAIQLTPD). Residues Cys-51, Cys-54, Cys-57, Cys-61, Cys-90, Cys-93, Cys-96, and Cys-100 each contribute to the [4Fe-4S] cluster site.

Belongs to the complex I 23 kDa subunit family. NDH-1 is composed of 14 different subunits. Subunits NuoA, H, J, K, L, M, N constitute the membrane sector of the complex. Requires [4Fe-4S] cluster as cofactor.

It localises to the cell inner membrane. It carries out the reaction a quinone + NADH + 5 H(+)(in) = a quinol + NAD(+) + 4 H(+)(out). Functionally, NDH-1 shuttles electrons from NADH, via FMN and iron-sulfur (Fe-S) centers, to quinones in the respiratory chain. The immediate electron acceptor for the enzyme in this species is believed to be ubiquinone. Couples the redox reaction to proton translocation (for every two electrons transferred, four hydrogen ions are translocated across the cytoplasmic membrane), and thus conserves the redox energy in a proton gradient. This is NADH-quinone oxidoreductase subunit I from Methylococcus capsulatus (strain ATCC 33009 / NCIMB 11132 / Bath).